The primary structure comprises 636 residues: Chaperone protein DnaK (636 aa).

Thr203 carries the phosphothreonine; by autocatalysis modification. Residues 602–636 (VYGKQQEGAPAQEEPSAEGKKADDEGTVEGEFREV) form a disordered region. Positions 618–636 (AEGKKADDEGTVEGEFREV) are enriched in basic and acidic residues.

This sequence belongs to the heat shock protein 70 family.

In terms of biological role, acts as a chaperone. This is Chaperone protein DnaK from Dehalococcoides mccartyi (strain CBDB1).